The primary structure comprises 142 residues: Hemoglobin subunit alpha (142 aa).

A Globin domain is found at 2–142 (VLSAADKGNV…VSTVLTSKYR (141 aa)). S4 bears the Phosphoserine mark. K8 and K12 each carry N6-succinyllysine. K17 is subject to N6-acetyllysine; alternate. An N6-succinyllysine; alternate modification is found at K17. Phosphotyrosine is present on Y25. S36 carries the post-translational modification Phosphoserine. At K41 the chain carries N6-succinyllysine. S50 carries the phosphoserine modification. H59 contributes to the O2 binding site. A heme b-binding site is contributed by H88. S103 is modified (phosphoserine). T109 carries the post-translational modification Phosphothreonine. Residue S125 is modified to Phosphoserine. Phosphothreonine occurs at positions 135 and 138. The residue at position 139 (S139) is a Phosphoserine.

The protein belongs to the globin family. As to quaternary structure, heterotetramer of two alpha chains and two beta chains. In terms of tissue distribution, red blood cells.

Involved in oxygen transport from the lung to the various peripheral tissues. Functionally, hemopressin acts as an antagonist peptide of the cannabinoid receptor CNR1. Hemopressin-binding efficiently blocks cannabinoid receptor CNR1 and subsequent signaling. The polypeptide is Hemoglobin subunit alpha (HBA) (Bos gaurus frontalis (Domestic gayal)).